The primary structure comprises 335 residues: Photosystem II assembly lipoprotein Ycf48 (335 aa).

A signal peptide spans 1–23; the sequence is MSRLFSNLFNLLLIAAIGFGLSG. Cys24 carries N-palmitoyl cysteine lipidation. A lipid anchor (S-diacylglycerol cysteine) is attached at Cys24.

The protein belongs to the Ycf48 family. As to quaternary structure, part of early PSII assembly complexes which includes D1 (psbA) and PsbI; not found in mature PSII. Binds to the lumenal side of PSII complexes. Interacts with YidC.

It is found in the cellular thylakoid membrane. In terms of biological role, a factor required for optimal assembly of photosystem II (PSII), acting in the early stages of PSII assembly. Also plays a role in replacement of photodamaged D1 (psbA). Assists YidC in synthesis of chlorophyll-binding proteins. The protein is Photosystem II assembly lipoprotein Ycf48 of Prochlorococcus marinus (strain MIT 9313).